The sequence spans 357 residues: Isopenicillin-N N-acyltransferase (357 aa).

D121 and R310 together coordinate 6-aminopenicillanate.

This sequence belongs to the peptidase C45 family. As to quaternary structure, the active form of the enzyme results from processing of the 40-kDa monomeric precursor to a heterodimer containing subunits of 11 and 29 kDa. In terms of processing, the pre-AAT protein is synthesized as 40 kDa precursor which is then self-processed into an 11 kDa (protein A) and a 29 kDa (protein B). The B protein carries AAT activity.

It is found in the peroxisome matrix. It carries out the reaction isopenicillin N + phenylacetyl-CoA + H2O = penicillin G + L-2-aminoadipate + CoA + H(+). It participates in antibiotic biosynthesis; penicillin G biosynthesis; penicillin G from L-alpha-aminoadipate and L-cysteine and L-valine: step 3/3. Isopenicillin-N N-acyltransferase; part of the gene cluster that mediates the biosynthesis of penicillin, the world's most important antibiotic. AatA catalyzes the exchange of the alpha-aminoadipyl side chain of isopenicillin N for phenylacetic acid to yield penicillin. This step occurs in the peroxisomal matrix and the penM and paaT transporters are involved in the isopenicillin N and phenylacetic acid import into the peroxisome, respectively. The penicillin biosynthesis occurs via 3 enzymatic steps, the first corresponding to the production of the tripeptide N-[(5S)-5-amino-5-carboxypentanoyl]-L-cysteinyl-D-valine (LLD-ACV or ACV) by the NRPS acvA. The tripeptide ACV is then cyclized to isopenicillin N (IPN) by the isopenicillin N synthase ipnA that forms the beta-lactam nucleus. Finally, the alpha-aminoadipyl side chain is exchanged for phenylacetic acid by the isopenicillin N acyltransferase aatA to yield penicillin in the peroxisomal matrix. The polypeptide is Isopenicillin-N N-acyltransferase (Penicillium chrysogenum (Penicillium notatum)).